The sequence spans 308 residues: MAHKSKILIIGGTGYIGKFIVEASAKSGHPTFALVRESTVSDPVKGKLVEKFKGLGVTLLHGDLYDHESLVKAFKQVDVVISTVGHLQLADQVKIIAAIKEAGNIKRFFPSEFGNDVDRVHAVEPAKTAFATKAEIRRKTEAEGIPYTYVSSNFFAGYFLPTLAQPGLTSPPREKVVIFGDGNARAVFNKEDDIGTYTIRAVDDPRTLNKIVYIKPAKNIYSFNEIVALWEKKIGKTLEKIYVPEEKLLKDIQESPIPINVILAINHSVFVKGDHTNFEIEASFGVEASELYPDVKYTTVEEYLQQFV.

NADP(+) contacts are provided by residues 11–17 (GGTGYIG), arginine 36, and lysine 45. The active-site Proton acceptor is the lysine 133. NADP(+) is bound at residue arginine 137.

It belongs to the NmrA-type oxidoreductase family. Isoflavone reductase subfamily.

The catalysed reaction is (-)-dehydrodiconiferyl alcohol + NADPH + H(+) = (S)-isodihydrodehydrodiconiferyl alcohol + NADP(+). The enzyme catalyses (+)-dehydrodiconiferyl alcohol + NADPH + H(+) = (R)-isodihydrodehydrodiconiferyl alcohol + NADP(+). Its function is as follows. Oxidoreductase involved in lignan biosynthesis. Catalyzes the NADPH-dependent reduction of phenylcoumaran benzylic ethers. Converts dehydrodiconiferyl alcohol (DDC) to isodihydrodehydrodiconiferyl alcohol (IDDDC). The chain is Phenylcoumaran benzylic ether reductase Betv6 from Betula pendula (European white birch).